The sequence spans 428 residues: Light-independent protochlorophyllide reductase subunit N (428 aa).

Cys29, Cys54, and Cys115 together coordinate [4Fe-4S] cluster.

Belongs to the BchN/ChlN family. In terms of assembly, protochlorophyllide reductase is composed of three subunits; BchL, BchN and BchB. Forms a heterotetramer of two BchB and two BchN subunits. The cofactor is [4Fe-4S] cluster.

The catalysed reaction is chlorophyllide a + oxidized 2[4Fe-4S]-[ferredoxin] + 2 ADP + 2 phosphate = protochlorophyllide a + reduced 2[4Fe-4S]-[ferredoxin] + 2 ATP + 2 H2O. It functions in the pathway porphyrin-containing compound metabolism; bacteriochlorophyll biosynthesis (light-independent). In terms of biological role, component of the dark-operative protochlorophyllide reductase (DPOR) that uses Mg-ATP and reduced ferredoxin to reduce ring D of protochlorophyllide (Pchlide) to form chlorophyllide a (Chlide). This reaction is light-independent. The NB-protein (BchN-BchB) is the catalytic component of the complex. The protein is Light-independent protochlorophyllide reductase subunit N of Roseobacter denitrificans (strain ATCC 33942 / OCh 114) (Erythrobacter sp. (strain OCh 114)).